The primary structure comprises 73 residues: Guanine nucleotide-binding protein G(I)/G(S)/G(O) subunit gamma-11 (73 aa).

A disordered region spans residues 51–73 (DPLVKGIPEDKNPFKEKGSCVIS). C70 is subject to Cysteine methyl ester. A lipid anchor (S-farnesyl cysteine) is attached at C70. Positions 71-73 (VIS) are cleaved as a propeptide — removed in mature form.

It belongs to the G protein gamma family. As to quaternary structure, g proteins are composed of 3 units, alpha, beta and gamma. Interacts with beta-1 and beta-3, but not with beta-2. Abundantly expressed in all tissues tested except for brain.

It localises to the cell membrane. Functionally, guanine nucleotide-binding proteins (G proteins) are involved as a modulator or transducer in various transmembrane signaling systems. The beta and gamma chains are required for the GTPase activity, for replacement of GDP by GTP, and for G protein-effector interaction. This is Guanine nucleotide-binding protein G(I)/G(S)/G(O) subunit gamma-11 (GNG11) from Homo sapiens (Human).